A 358-amino-acid chain; its full sequence is 3-isopropylmalate dehydrogenase 2 (358 aa).

74 to 87 (GPKWDKLPAESRPE) is an NAD(+) binding site. Positions 94, 104, 132, and 221 each coordinate substrate. Mg(2+) is bound by residues Asp-221, Asp-245, and Asp-249. 279-291 (GSAPDIAGQGVAN) is an NAD(+) binding site.

The protein belongs to the isocitrate and isopropylmalate dehydrogenases family. LeuB type 1 subfamily. As to quaternary structure, homodimer. The cofactor is Mg(2+). Requires Mn(2+) as cofactor.

The protein resides in the cytoplasm. It carries out the reaction (2R,3S)-3-isopropylmalate + NAD(+) = 4-methyl-2-oxopentanoate + CO2 + NADH. The protein operates within amino-acid biosynthesis; L-leucine biosynthesis; L-leucine from 3-methyl-2-oxobutanoate: step 3/4. Functionally, catalyzes the oxidation of 3-carboxy-2-hydroxy-4-methylpentanoate (3-isopropylmalate) to 3-carboxy-4-methyl-2-oxopentanoate. The product decarboxylates to 4-methyl-2 oxopentanoate. The chain is 3-isopropylmalate dehydrogenase 2 from Dechloromonas aromatica (strain RCB).